A 407-amino-acid chain; its full sequence is UPF0597 protein NAMH_0191 (407 aa).

It belongs to the UPF0597 family.

The protein is UPF0597 protein NAMH_0191 of Nautilia profundicola (strain ATCC BAA-1463 / DSM 18972 / AmH).